A 380-amino-acid polypeptide reads, in one-letter code: MASLRKTHPLIKIANDALVDLPTPSNISAWWNFGSLLGLCLITQILTGLFLAMHYTSDISTAFSSVTHICRDVNYGWLIRNIHANGASFFFICIYMHIARGLYYGSYLYKETWNIGVVLLLLVMMTAFVGYVLPWGQMSFWGATVITNLLSAVPYMGDMLVQWIWGGFSVDNATLTRFFAFHFLLPFIIAAATVIHLLFLHETGSNNPIGLNSDADKISFHPYFSYKDLLGFVIMLLALTLLALFSPNLLGDPENFTPANPLVTPPHIKPEWYFLFAYAILRSIPNKLGGVLALLFSILVLMVVPLLHTSKQRGLTFRPITQFLFWTLVADMIILTWIGGMPVEHPFIIIGQIASVLYFALFLVLFPLAGWLENKALKWA.

The next 4 helical transmembrane spans lie at 33 to 53 (FGSL…FLAM), 77 to 98 (WLIR…YMHI), 113 to 133 (WNIG…GYVL), and 178 to 198 (FFAF…IHLL). Heme b contacts are provided by histidine 83 and histidine 97. Residues histidine 182 and histidine 196 each coordinate heme b. Residue histidine 201 participates in a ubiquinone binding. 4 consecutive transmembrane segments (helical) span residues 226-246 (YKDL…ALFS), 288-308 (LGGV…PLLH), 320-340 (ITQF…WIGG), and 347-367 (FIII…VLFP).

Belongs to the cytochrome b family. The cytochrome bc1 complex contains 3 respiratory subunits (MT-CYB, CYC1 and UQCRFS1), 2 core proteins (UQCRC1 and UQCRC2) and probably 6 low-molecular weight proteins. Requires heme b as cofactor.

It is found in the mitochondrion inner membrane. Its function is as follows. Component of the ubiquinol-cytochrome c reductase complex (complex III or cytochrome b-c1 complex) that is part of the mitochondrial respiratory chain. The b-c1 complex mediates electron transfer from ubiquinol to cytochrome c. Contributes to the generation of a proton gradient across the mitochondrial membrane that is then used for ATP synthesis. The sequence is that of Cytochrome b (mt-cyb) from Carassius auratus (Goldfish).